A 593-amino-acid chain; its full sequence is Maternal uncoordinated protein 2 (593 aa).

It belongs to the SCC4/mau-2 family. May heterodimerize with scc-2/SCC2 to form the cohesin loading complex.

The protein localises to the nucleus. It is found in the nucleoplasm. Its subcellular location is the cytoplasm. Its function is as follows. Plays an important role in the loading of the cohesin complex on to DNA. Forms a heterodimeric complex (also known as cohesin loading complex) with scc-2/SCC2 which mediates the loading of the cohesin complex onto chromatin. Required for normal development until the fourth larval stage. Functions cell autonomously to guide migrations during the development of the nervous system. Participates in the guidance of mechanosensory neuron AVM by a slt-1-independent mechanism. Regulates chromosome segregation in early embryos. The sequence is that of Maternal uncoordinated protein 2 from Caenorhabditis elegans.